The following is a 251-amino-acid chain: Ribonuclease PH (251 aa).

Residues arginine 87 and glycine 125–arginine 127 contribute to the phosphate site.

It belongs to the RNase PH family. Homohexameric ring arranged as a trimer of dimers.

The catalysed reaction is tRNA(n+1) + phosphate = tRNA(n) + a ribonucleoside 5'-diphosphate. Its function is as follows. Phosphorolytic 3'-5' exoribonuclease that plays an important role in tRNA 3'-end maturation. Removes nucleotide residues following the 3'-CCA terminus of tRNAs; can also add nucleotides to the ends of RNA molecules by using nucleoside diphosphates as substrates, but this may not be physiologically important. Probably plays a role in initiation of 16S rRNA degradation (leading to ribosome degradation) during starvation. The sequence is that of Ribonuclease PH from Saccharopolyspora erythraea (strain ATCC 11635 / DSM 40517 / JCM 4748 / NBRC 13426 / NCIMB 8594 / NRRL 2338).